A 133-amino-acid chain; its full sequence is p53 and DNA damage-regulated protein 1 (133 aa).

The protein belongs to the prefoldin subunit beta family. In terms of assembly, component of the PAQosome complex which is responsible for the biogenesis of several protein complexes and which consists of R2TP complex members RUVBL1, RUVBL2, RPAP3 and PIH1D1, URI complex members PFDN2, PFDN6, PDRG1, UXT and URI1 as well as ASDURF, POLR2E and DNAAF10/WDR92. In terms of tissue distribution, predominantly expressed in normal testis and exhibits reduced but detectable expression in other organs.

It localises to the cytoplasm. Its function is as follows. May play a role in chaperone-mediated protein folding. This is p53 and DNA damage-regulated protein 1 (PDRG1) from Homo sapiens (Human).